The sequence spans 222 residues: Ribosomal RNA small subunit methyltransferase I (222 aa).

This sequence belongs to the methyltransferase superfamily. RsmI family.

Its subcellular location is the cytoplasm. The enzyme catalyses cytidine(1402) in 16S rRNA + S-adenosyl-L-methionine = 2'-O-methylcytidine(1402) in 16S rRNA + S-adenosyl-L-homocysteine + H(+). Its function is as follows. Catalyzes the 2'-O-methylation of the ribose of cytidine 1402 (C1402) in 16S rRNA. The polypeptide is Ribosomal RNA small subunit methyltransferase I (Mycoplasmopsis pulmonis (strain UAB CTIP) (Mycoplasma pulmonis)).